Consider the following 406-residue polypeptide: Argininosuccinate synthase (406 aa).

ATP is bound by residues 10–18 (AYSGGLDTS) and Ala-37. Residues Tyr-88 and Ser-93 each contribute to the L-citrulline site. Gly-118 contacts ATP. The L-aspartate site is built by Thr-120, Asn-124, and Asp-125. Residue Asn-124 participates in L-citrulline binding. 5 residues coordinate L-citrulline: Arg-128, Ser-179, Ser-188, Glu-264, and Tyr-276.

The protein belongs to the argininosuccinate synthase family. Type 1 subfamily. In terms of assembly, homotetramer.

It is found in the cytoplasm. The catalysed reaction is L-citrulline + L-aspartate + ATP = 2-(N(omega)-L-arginino)succinate + AMP + diphosphate + H(+). It functions in the pathway amino-acid biosynthesis; L-arginine biosynthesis; L-arginine from L-ornithine and carbamoyl phosphate: step 2/3. This chain is Argininosuccinate synthase, found in Azotobacter vinelandii (strain DJ / ATCC BAA-1303).